The primary structure comprises 232 residues: Small ribosomal subunit protein uS3 (232 aa).

A KH type-2 domain is found at 39 to 107 (IRKFLKTKLY…DIAINIKEER (69 aa)). Basic and acidic residues predominate over residues 213-222 (QADKNEDTSP). A disordered region spans residues 213-232 (QADKNEDTSPKKPRRARRGK). Over residues 223 to 232 (KKPRRARRGK) the composition is skewed to basic residues.

This sequence belongs to the universal ribosomal protein uS3 family. As to quaternary structure, part of the 30S ribosomal subunit. Forms a tight complex with proteins S10 and S14.

Binds the lower part of the 30S subunit head. Binds mRNA in the 70S ribosome, positioning it for translation. The chain is Small ribosomal subunit protein uS3 from Campylobacter fetus subsp. fetus (strain 82-40).